The following is a 425-amino-acid chain: Kynurenine/alpha-aminoadipate aminotransferase, mitochondrial (425 aa).

A mitochondrion-targeting transit peptide spans 1 to 29; that stretch reads MNYARFITAASAARNPSPIRTMTDILSRG. Substrate is bound at residue R20. K69 is modified (N6-acetyllysine). Residues Y74 and Y142 each coordinate substrate. K179 is modified (N6-acetyllysine). Positions 181 to 208 are disordered; sequence EDAKNPQKNTPKFLYTVPNGNNPTGNSL. Residues 198 to 208 are compositionally biased toward polar residues; that stretch reads PNGNNPTGNSL. N202 contributes to the substrate binding site. Position 263 is an N6-(pyridoxal phosphate)lysine; alternate (K263). An N6-acetyllysine; alternate mark is found at K263, K339, and K367. 3 positions are modified to N6-succinyllysine; alternate: K263, K339, and K367. Substrate is bound at residue R399. K422 carries the post-translational modification N6-acetyllysine.

It belongs to the class-I pyridoxal-phosphate-dependent aminotransferase family. In terms of assembly, homodimer. It depends on pyridoxal 5'-phosphate as a cofactor. In terms of tissue distribution, higher expression in the liver. Also found in heart, brain, kidney, pancreas, prostate, testis and ovary.

Its subcellular location is the mitochondrion. It catalyses the reaction glycine + 2-oxoglutarate = glyoxylate + L-glutamate. The enzyme catalyses L-kynurenine + 2-oxoglutarate = kynurenate + L-glutamate + H2O. It carries out the reaction L-kynurenine + glyoxylate = kynurenate + glycine + H2O. The catalysed reaction is 3-hydroxy-L-kynurenine + glyoxylate = xanthurenate + glycine + H2O. It catalyses the reaction 2-oxohexanoate + L-kynurenine = L-2-aminohexanoate + kynurenate + H2O. The enzyme catalyses 3-phenylpyruvate + L-kynurenine = kynurenate + L-phenylalanine + H2O. It carries out the reaction 4-methylsulfanyl-2-oxobutanoate + L-kynurenine = kynurenate + L-methionine + H2O. The catalysed reaction is 2-oxo-3-sulfanylpropanoate + L-kynurenine = kynurenate + L-cysteine + H2O. It catalyses the reaction indole-3-pyruvate + L-kynurenine = kynurenate + L-tryptophan + H2O. The enzyme catalyses 2-oxopentanoate + L-kynurenine = L-2-aminopentanoate + kynurenate + H2O. It carries out the reaction 4-methyl-2-oxopentanoate + L-kynurenine = kynurenate + L-leucine + H2O. The catalysed reaction is L-2-aminoadipate + 2-oxoglutarate = 2-oxoadipate + L-glutamate. It catalyses the reaction glyoxylate + L-methionine = 4-methylsulfanyl-2-oxobutanoate + glycine. The enzyme catalyses L-2-aminoadipate + glyoxylate = 2-oxoadipate + glycine. It carries out the reaction L-tyrosine + glyoxylate = 3-(4-hydroxyphenyl)pyruvate + glycine. The catalysed reaction is glyoxylate + L-phenylalanine = 3-phenylpyruvate + glycine. It catalyses the reaction L-tryptophan + glyoxylate = indole-3-pyruvate + glycine. The enzyme catalyses L-leucine + glyoxylate = 4-methyl-2-oxopentanoate + glycine. It carries out the reaction 2-oxobutanoate + L-kynurenine = (2S)-2-aminobutanoate + kynurenate + H2O. The catalysed reaction is 2-oxoadipate + L-kynurenine = L-2-aminoadipate + kynurenate + H2O. The protein operates within amino-acid degradation; L-lysine degradation via saccharopine pathway; glutaryl-CoA from L-lysine: step 4/6. Its activity is regulated as follows. Kynurenine transaminase activity is competitively inhibited by aminoadipate, asparagine, glutamate, histidine, cysteine, lysine, 3-hydroxy-kynurenine and phenylalanine. Its function is as follows. Transaminase with broad substrate specificity. Has transaminase activity towards aminoadipate, kynurenine, methionine and glutamate. Shows activity also towards tryptophan, aspartate and hydroxykynurenine. Accepts a variety of oxo-acids as amino-group acceptors, with a preference for 2-oxoglutarate, 2-oxocaproic acid, phenylpyruvate and alpha-oxo-gamma-methiol butyric acid. Can also use glyoxylate as amino-group acceptor (in vitro). In Homo sapiens (Human), this protein is Kynurenine/alpha-aminoadipate aminotransferase, mitochondrial.